The sequence spans 316 residues: Small ribosomal subunit protein RACK1 (316 aa).

WD repeat units follow at residues 4 to 46 (QMTL…WRLT), 52 to 93 (YGVP…WDLS), 94 to 135 (TGQT…WNTL), 137 to 180 (VCKY…WNLT), 181 to 221 (NCKL…LWDL), 222 to 263 (NEGK…WDLE), and 264 to 312 (GKVV…WQVS).

It belongs to the WD repeat G protein beta family. Ribosomal protein RACK1 subfamily.

The chain is Small ribosomal subunit protein RACK1 from Biomphalaria glabrata (Bloodfluke planorb).